A 312-amino-acid polypeptide reads, in one-letter code: Olfactory receptor 1493 (312 aa).

The Extracellular portion of the chain corresponds to 1–23; the sequence is MNNKTVITHFLLLGLPIPPEHQQ. Residue asparagine 3 is glycosylated (N-linked (GlcNAc...) asparagine). Residues 24–48 traverse the membrane as a helical segment; that stretch reads LFFALFLIMYLTTFLGNLLIVVLVQ. Residues 49–55 are Cytoplasmic-facing; the sequence is LDSHLHT. Residues 56–77 traverse the membrane as a helical segment; sequence PMYLFLSNLSFSDLCFSSVTML. The Extracellular segment spans residues 78–98; sequence KLLQNIQSQVPSISYAGCLTQ. The cysteines at positions 95 and 187 are disulfide-linked. Residues 99–118 form a helical membrane-spanning segment; the sequence is IFFFLLFGYLGNFLLVAMAY. The Cytoplasmic portion of the chain corresponds to 119-137; it reads DRYVAICFPLHYTNIMSHK. A helical membrane pass occupies residues 138-156; it reads LCTCLLLVFWIMTSSHAMM. The Extracellular segment spans residues 157–194; sequence HTLLAARLSFCENNVLLNFFCDLFVLLKLACSDTYVNE. The chain crosses the membrane as a helical span at residues 195–217; sequence LMIHIMGVIIIVIPFVLIVISYA. At 218 to 234 the chain is on the cytoplasmic side; sequence KIISSILKVPSTQSIHK. Residues 235-258 traverse the membrane as a helical segment; the sequence is VFSTCGSHLSVVSLFYGTIIGLYL. Residues 259-270 lie on the Extracellular side of the membrane; the sequence is CPSGDNFSLKGS. Residues 271–290 form a helical membrane-spanning segment; sequence AMAMMYTVVTPMLNPFIYSL. Topologically, residues 291-312 are cytoplasmic; sequence RNRDMKQALIRVTCSKKISLPW.

Belongs to the G-protein coupled receptor 1 family. As to expression, olfactory epithelium.

Its subcellular location is the cell membrane. Odorant receptor. The polypeptide is Olfactory receptor 1493 (Olr1493) (Rattus norvegicus (Rat)).